Consider the following 504-residue polypeptide: Pyruvate kinase (504 aa).

Arg53 provides a ligand contact to substrate. K(+) contacts are provided by Asn55, Ser57, Asp88, and Thr89. 55 to 58 is an ATP binding site; that stretch reads NFSH. ATP contacts are provided by Arg95 and Lys181. Glu246 is a binding site for Mg(2+). Substrate is bound by residues Gly269, Asp270, and Thr302. Position 270 (Asp270) interacts with Mg(2+).

This sequence belongs to the pyruvate kinase family. In terms of assembly, homotetramer. Mg(2+) serves as cofactor. The cofactor is K(+).

Its subcellular location is the cytoplasm. The enzyme catalyses pyruvate + ATP = phosphoenolpyruvate + ADP + H(+). It participates in carbohydrate degradation; glycolysis; pyruvate from D-glyceraldehyde 3-phosphate: step 5/5. The protein is Pyruvate kinase (CDC19) of Candida albicans (strain SC5314 / ATCC MYA-2876) (Yeast).